Reading from the N-terminus, the 1173-residue chain is SMC5-SMC6 complex localization factor protein 2 (1173 aa).

The segment at 1–109 (MTRRCMPARP…KPKRVPPEKS (109 aa)) is disordered. 2 stretches are compositionally biased toward basic and acidic residues: residues 39-50 (KRTESPGDRKQS) and 88-106 (QFER…RVPP). The APIM motif motif lies at 137-149 (SLASKYLAKGTNI). Disordered stretches follow at residues 161–230 (MKSL…PEES), 256–275 (QMEQ…SLSL), 280–373 (ERKY…QKEK), 394–620 (KEPS…EEET), and 635–663 (TPAA…VHPG). Residues 181–199 (ENNEKNDRDRGKTNADSKK) are compositionally biased toward basic and acidic residues. Composition is skewed to low complexity over residues 212-221 (SSRSLSSRSS) and 262-275 (NSEN…SLSL). Positions 280–293 (ERKYKPRQEQRKQN) are enriched in basic and acidic residues. The segment covering 317 to 330 (SDSWEPTSAGSKQN) has biased composition (polar residues). Basic and acidic residues-rich tracts occupy residues 339–349 (NSVDSDLKSTR) and 355–373 (KARE…QKEK). Over residues 409-428 (PSNSGNSGHHSTRNSDQIQV) the composition is skewed to polar residues. Ser-481 carries the post-translational modification Phosphoserine. Residues 499-520 (SKKDKERSSSKECSGHSTESTK) show a composition bias toward basic and acidic residues. Residues 571–592 (APSDKAPSEGESSGNSNAGSSA) are compositionally biased toward low complexity. A compositionally biased stretch (acidic residues) spans 602 to 619 (DSDEESLGYNLDSDEEEE). Phosphoserine is present on residues Ser-603, Ser-607, and Ser-614. An interaction with SIMC1 region spans residues 635 to 1173 (TPAATGKPPA…QLHDFWVPDS (539 aa)). Residues 664–1166 (TYTNTLERLV…NCRPTQGQLH (503 aa)) form an NSE6-like domain region. The tract at residues 702 to 1173 (PIRIGEEDST…QLHDFWVPDS (472 aa)) is required for interaction with SLF1 and RAD18.

Belongs to the FAM178 family. Forms a heterodimer with SIMC1. Interacts with SLF1 (via N-terminus); this interaction links RAD18 to the SMC5-SMC6 complex. Interacts with RAD18; this interaction is increased in a SLF1-dependent manner. Interacts with SMC5 and SMC6. As to expression, widely expressed. Expressed at higher level in skeletal muscle and at slightly lower level in brain, liver and heart, than in lung, kidney, spleen and thymus.

It is found in the nucleus. Its subcellular location is the PML body. Plays a role in the DNA damage response (DDR) pathway by regulating postreplication repair of UV-damaged DNA and genomic stability maintenance. The SLF1-SLF2 complex acts to link RAD18 with the SMC5-SMC6 complex at replication-coupled interstrand cross-links (ICL) and DNA double-strand breaks (DSBs) sites on chromatin during DNA repair in response to stalled replication forks. Promotes the recruitment of the SMC5-SMC6 complex to DNA lesions. Plays a role in SMC5-SMC6 complex recruitment for viral restriction. Forms a complex with SIMC1 and this complex is required to recruit SMC5-SMC6 complex to PML nuclear bodies and sites of viral replication. This chain is SMC5-SMC6 complex localization factor protein 2, found in Homo sapiens (Human).